The sequence spans 316 residues: ATP synthase gamma chain (316 aa).

It belongs to the ATPase gamma chain family. As to quaternary structure, F-type ATPases have 2 components, CF(1) - the catalytic core - and CF(0) - the membrane proton channel. CF(1) has five subunits: alpha(3), beta(3), gamma(1), delta(1), epsilon(1). CF(0) has three main subunits: a, b and c.

It localises to the cellular thylakoid membrane. Produces ATP from ADP in the presence of a proton gradient across the membrane. The gamma chain is believed to be important in regulating ATPase activity and the flow of protons through the CF(0) complex. The chain is ATP synthase gamma chain from Prochlorococcus marinus (strain NATL1A).